Reading from the N-terminus, the 119-residue chain is MISKIDKNKVRLKRHARVRTNLSGTAEKPRLNVYRSNKHIYAQIIDDNKGVTLAQASSKDSDIATTATKVELATKVGEAIAKKATDKGIKEIVFDRGGYLYHGRVKALAEAARESGLEF.

Belongs to the universal ribosomal protein uL18 family. As to quaternary structure, part of the 50S ribosomal subunit; part of the 5S rRNA/L5/L18/L25 subcomplex. Contacts the 5S and 23S rRNAs.

In terms of biological role, this is one of the proteins that bind and probably mediate the attachment of the 5S RNA into the large ribosomal subunit, where it forms part of the central protuberance. The protein is Large ribosomal subunit protein uL18 of Staphylococcus aureus (strain bovine RF122 / ET3-1).